A 1910-amino-acid polypeptide reads, in one-letter code: Endoribonuclease dcr-1 (1910 aa).

A Helicase ATP-binding domain is found at 20-201 (LLDKATKKNT…KLMEQLKKLE (182 aa)). Position 33 to 40 (33 to 40 (LGTGSGKT)) interacts with ATP. Positions 145 to 148 (DECH) match the DEAH box motif. The Helicase C-terminal domain occupies 371-542 (EFQKERMKLE…TVNNPIEDDS (172 aa)). The region spanning 571–667 (AIALINRYCS…LPKGRESIAK (97 aa)) is the Dicer dsRNA-binding fold domain. The PAZ domain maps to 845-1003 (YVSEVVANME…LVPELMDIHP (159 aa)). Disordered stretches follow at residues 951 to 988 (RIQNQPRRSRTVSNSSTSNIPQASASDSKESNTSVPHS), 1227 to 1248 (TASSSLSQTVQESTVSPPKQLT), and 1272 to 1309 (LEMSEDMEKPRRLEDTVNLEDYGDDQENQEDENTPTNF). Composition is skewed to polar residues over residues 970-988 (IPQASASDSKESNTSVPHS) and 1227-1245 (TASSSLSQTVQESTVSPPK). The stretch at 1245-1280 (KQLTKEEEQFKKLQNDLLKQAKERLEALEMSEDMEK) forms a coiled coil. Positions 1272–1286 (LEMSEDMEKPRRLED) are enriched in basic and acidic residues. The segment covering 1288-1304 (VNLEDYGDDQENQEDEN) has biased composition (acidic residues). RNase III domains lie at 1381–1589 (VSHI…LTLG) and 1643–1805 (FTQL…LDSG). Mg(2+) contacts are provided by Glu1682, Asp1791, and Glu1794. In terms of domain architecture, DRBM spans 1833–1896 (SPIRELMEFE…AKRALKYLHQ (64 aa)).

It belongs to the helicase family. Dicer subfamily. Component of the ERI/DICER complex at least composed of dcr-1, rrf-3 and eri-1. Interacts with pir-1. Requires Mg(2+) as cofactor. The cofactor is Mn(2+).

Functionally, component of the ERI/DICER complex which is involved in processing amplified double-stranded RNA (dsRNA) intermediates during small-RNA-mediated gene-silencing or RNA interference (RNAi). Involved in cleaving dsRNA in the RNAi pathway. It produces 21 to 23 bp dsRNAs (siRNAs) which target the selective destruction of homologous RNAs. Seems to process the precursor of the small temporal RNA let-7 which is involved in developmental timing. Required for avoidance behavior induced by small RNAs derived from pathogenic bacteria such as P.aeruginosa. Involved in innate immunity through its role in small RNA processing. In terms of biological role, tDCR-1 acts as a deoxyribonuclease (DNase) initiating DNA fragmentation during apoptosis, upstream of nucleases cps-6, crn-2 and nuc-1. The polypeptide is Endoribonuclease dcr-1 (Caenorhabditis elegans).